Consider the following 186-residue polypeptide: Peptidyl-tRNA hydrolase (186 aa).

Tyr14 contributes to the tRNA binding site. His19 acts as the Proton acceptor in catalysis. TRNA-binding residues include Tyr64, Asn66, and Asn112.

This sequence belongs to the PTH family. As to quaternary structure, monomer.

The protein localises to the cytoplasm. The catalysed reaction is an N-acyl-L-alpha-aminoacyl-tRNA + H2O = an N-acyl-L-amino acid + a tRNA + H(+). In terms of biological role, hydrolyzes ribosome-free peptidyl-tRNAs (with 1 or more amino acids incorporated), which drop off the ribosome during protein synthesis, or as a result of ribosome stalling. Catalyzes the release of premature peptidyl moieties from peptidyl-tRNA molecules trapped in stalled 50S ribosomal subunits, and thus maintains levels of free tRNAs and 50S ribosomes. This is Peptidyl-tRNA hydrolase from Bacillus anthracis.